We begin with the raw amino-acid sequence, 162 residues long: Zinc finger protein 593 homolog (162 aa).

The segment at 59–83 adopts a C2H2-type zinc-finger fold; the sequence is FYCVHCAKYFIDDTAMQAHFRTKVH. The segment at 110-162 is disordered; that stretch reads VKPKKRAMETQPSKEDVVAGKRIRVEVVPEDTDATDSPSTSKTKRKKVEKMET. The segment covering 115-136 has biased composition (basic and acidic residues); that stretch reads RAMETQPSKEDVVAGKRIRVEV. Over residues 151–162 the composition is skewed to basic residues; that stretch reads KTKRKKVEKMET.

It belongs to the ZNF593/BUD20 C2H2-type zinc-finger protein family. Associates with pre-60S ribosomal particles; released from the pre-60S particle very early in the cytoplasm.

The protein localises to the nucleus. The protein resides in the cytoplasm. Its function is as follows. Involved in pre-60S ribosomal particles maturation by promoting the nuclear export of the 60S ribosome. This is Zinc finger protein 593 homolog from Drosophila melanogaster (Fruit fly).